A 383-amino-acid chain; its full sequence is ATP phosphoribosyltransferase regulatory subunit (383 aa).

This sequence belongs to the class-II aminoacyl-tRNA synthetase family. HisZ subfamily. In terms of assembly, heteromultimer composed of HisG and HisZ subunits.

Its subcellular location is the cytoplasm. The protein operates within amino-acid biosynthesis; L-histidine biosynthesis; L-histidine from 5-phospho-alpha-D-ribose 1-diphosphate: step 1/9. In terms of biological role, required for the first step of histidine biosynthesis. May allow the feedback regulation of ATP phosphoribosyltransferase activity by histidine. This Desulfitobacterium hafniense (strain Y51) protein is ATP phosphoribosyltransferase regulatory subunit.